The chain runs to 406 residues: Glutamyl-tRNA reductase (406 aa).

Residues T50 to R53, S107, E112 to Q114, and Q118 contribute to the substrate site. Residue C51 is the Nucleophile of the active site. G187–G192 is a binding site for NADP(+).

The protein belongs to the glutamyl-tRNA reductase family. Homodimer.

It carries out the reaction (S)-4-amino-5-oxopentanoate + tRNA(Glu) + NADP(+) = L-glutamyl-tRNA(Glu) + NADPH + H(+). The protein operates within porphyrin-containing compound metabolism; protoporphyrin-IX biosynthesis; 5-aminolevulinate from L-glutamyl-tRNA(Glu): step 1/2. Functionally, catalyzes the NADPH-dependent reduction of glutamyl-tRNA(Glu) to glutamate 1-semialdehyde (GSA). The sequence is that of Glutamyl-tRNA reductase from Aquifex aeolicus (strain VF5).